Reading from the N-terminus, the 562-residue chain is Bifunctional coenzyme A synthase (562 aa).

A phosphoserine mark is found at Ser177 and Ser182. A phosphopantetheine adenylyltransferase region spans residues 179–357; sequence VARSAKQPVR…HKRPELPPGC (179 aa). Residues 359–562 enclose the DPCK domain; it reads VIGLTGISGS…KRISEAPSDP (204 aa). 364–371 lines the ATP pocket; it reads GISGSGKS.

The protein in the central section; belongs to the eukaryotic CoaD family. In terms of assembly, monomer. The N-terminus is blocked.

The protein localises to the cytoplasm. Its subcellular location is the mitochondrion matrix. It catalyses the reaction (R)-4'-phosphopantetheine + ATP + H(+) = 3'-dephospho-CoA + diphosphate. The enzyme catalyses 3'-dephospho-CoA + ATP = ADP + CoA + H(+). The protein operates within cofactor biosynthesis; coenzyme A biosynthesis; CoA from (R)-pantothenate: step 4/5. Its pathway is cofactor biosynthesis; coenzyme A biosynthesis; CoA from (R)-pantothenate: step 5/5. Functionally, bifunctional enzyme that catalyzes the fourth and fifth sequential steps of CoA biosynthetic pathway. The fourth reaction is catalyzed by the phosphopantetheine adenylyltransferase, coded by the coaD domain; the fifth reaction is catalyzed by the dephospho-CoA kinase, coded by the coaE domain. May act as a point of CoA biosynthesis regulation. This chain is Bifunctional coenzyme A synthase, found in Sus scrofa (Pig).